A 344-amino-acid chain; its full sequence is Secreted LysM effector LysM2 (344 aa).

An N-terminal signal peptide occupies residues M1–G24. Positions Y36 to M80 constitute a LysM 1 domain. The segment covering S88–A134 has biased composition (low complexity). The disordered stretch occupies residues S88–M141. 3 LysM domains span residues K153–V199, K216–V262, and K296–V342.

Belongs to the secreted LysM effector family.

In terms of biological role, might have a role in sequestration of chitin oligosaccharides (breakdown products of fungal cell walls that are released during invasion and act as triggers of host immunity) to dampen host defense. The chain is Secreted LysM effector LysM2 from Penicillium expansum (Blue mold rot fungus).